Here is a 342-residue protein sequence, read N- to C-terminus: AM-toxin biosynthesis protein 12 (342 aa).

The first 20 residues, 1-20, serve as a signal peptide directing secretion; the sequence is MSLLITSLAWGALLDPEVSS.

The protein operates within mycotoxin biosynthesis. Part of the gene clusters that mediate the biosynthesis of AM-toxins, host-selective toxins (HSTs) causing Alternaria blotch on apple, a worldwide distributed disease. AM-toxins are cyclic depsipeptides containing the 3 residues 2-hydroxy-isovaleric acid (2-HIV), dehydroalanine, L-alanine which are common for all 3 AM-toxins I to III. The fourth precursor is L-alpha-amino-methoxyphenyl-valeric acid (L-Amv) for AM-toxin I, L-alpha-amino-phenyl-valeric acid (L-Apv) for AM-toxin II, and L-alpha-amino-hydroxyphenyl-valeric acid (L-Ahv) for AM-toxin III. AM-toxins have two target sites for affecting susceptible apple cells; they cause invagination of the plasma membrane and electrolyte loss and chloroplast disorganization. The non-ribosomal peptide synthetase AMT1 contains 4 catalytic modules and is responsible for activation of each residue in AM-toxin. The aldo-keto reductase AMT2 catalyzes the conversion of 2-keto-isovaleric acid (2-KIV) to 2-hydroxy-isovaleric acid (2-HIV), one of the precursor residues incorporated by AMT1 during AM-toxin biosynthesis, by reduction of its ketone to an alcohol. The cytochrome P450 monooxygenase AMT3 and the thioesterase AMT4 are also important for AM-toxin production, but their exact function within the AM-toxin biosynthesis are not known yet. Up to 21 proteins (including AMT1 to AMT4) are predicted to be involved in AM-toxin biosynthesis since their expression ishighly up-regulated in AM-toxin-producing cultures. The chain is AM-toxin biosynthesis protein 12 from Alternaria alternata (Alternaria rot fungus).